Reading from the N-terminus, the 157-residue chain is Ribosomal RNA large subunit methyltransferase H (157 aa).

Residues Gly104 and Leu123–Leu128 each bind S-adenosyl-L-methionine.

Belongs to the RNA methyltransferase RlmH family. As to quaternary structure, homodimer.

The protein resides in the cytoplasm. It carries out the reaction pseudouridine(1915) in 23S rRNA + S-adenosyl-L-methionine = N(3)-methylpseudouridine(1915) in 23S rRNA + S-adenosyl-L-homocysteine + H(+). Its function is as follows. Specifically methylates the pseudouridine at position 1915 (m3Psi1915) in 23S rRNA. In Nitrosococcus oceani (strain ATCC 19707 / BCRC 17464 / JCM 30415 / NCIMB 11848 / C-107), this protein is Ribosomal RNA large subunit methyltransferase H.